Consider the following 580-residue polypeptide: High affinity choline transporter 1 (580 aa).

The Extracellular segment spans residues 1 to 6 (MPFHVE). Residues 7-27 (GLVAIILFYLLIFLVGIWAAW) form a helical membrane-spanning segment. Over 28 to 48 (KTKNSGNAEERSEAIIVGGRD) the chain is Cytoplasmic. Residues 49-69 (IGLLVGGFTMTATWVGGGYIN) traverse the membrane as a helical segment. At 70-81 (GTAEAVYGPGCG) the chain is on the extracellular side. The helical transmembrane segment at 82 to 102 (LAWAQAPIGYSLSLILGGLFF) threads the bilayer. Residues 103 to 125 (AKPMRSKGYVTMLDPFQQIYGKR) are Cytoplasmic-facing. A helical membrane pass occupies residues 126-146 (MGGLLFIPALMGEMFWAAAIF). Residues 147 to 164 (SALGATISVIIDVDVNIS) lie on the Extracellular side of the membrane. A helical transmembrane segment spans residues 165–185 (VIVSALIAILYTLVGGLYSVA). The Cytoplasmic portion of the chain corresponds to 186–191 (YTDVVQ). Residues 192–212 (LFCIFIGLWISVPFALSHPAV) traverse the membrane as a helical segment. Residues 213-237 (TDIGFTAVHAKYQSPWLGTIESVEV) lie on the Extracellular side of the membrane. Residues 238–258 (YTWLDNFLLLMLGGIPWQAYF) form a helical membrane-spanning segment. The Cytoplasmic portion of the chain corresponds to 259–274 (QRVLSSSSATYAQVLS). The chain crosses the membrane as a helical span at residues 275–295 (FLAAFGCLVMALPAICIGAIG). Over 296 to 317 (ASTDWNQTAYGFPDPKTKEEAD) the chain is Extracellular. Asn-301 carries an N-linked (GlcNAc...) asparagine glycan. Residues 318–338 (MILPIVLQYLCPVYISFFGLG) form a helical membrane-spanning segment. Topologically, residues 339–376 (AVSAAVMSSADSSILSASSMFARNIYQLSFRQNASDKE) are cytoplasmic. A helical membrane pass occupies residues 377-397 (IVWVMRITVFVFGASATAMAL). Residues 398 to 406 (LTKTVYGLW) lie on the Extracellular side of the membrane. Residues 407–427 (YLSSDLVYIIIFPQLLCVLFI) form a helical membrane-spanning segment. At 428-435 (KGTNTYGA) the chain is on the cytoplasmic side. Residues 436 to 456 (VAGYIFGLFLRITGGEPYLYL) traverse the membrane as a helical segment. At 457–481 (QPLIFYPGYYPDKNGIYNQRFPFKT) the chain is on the extracellular side. A helical membrane pass occupies residues 482 to 502 (LSMVTSFFTNICVSYLAKYLF). The segment at 502–580 (FESGTLPPKL…EGSGTEDNLQ (79 aa)) is mediates interaction with SEC14L1. Over 503 to 580 (ESGTLPPKLD…EGSGTEDNLQ (78 aa)) the chain is Cytoplasmic. The Dileucine-like motif motif lies at 527–532 (DKTILV).

It belongs to the sodium:solute symporter (SSF) (TC 2.A.21) family. In terms of assembly, homooligomerizes at cell surface. Interacts with SEC14L1; may regulate SLC5A7. Post-translationally, phosphorylated. As to expression, expressed in basal forebrain, brain stem, spinal chord, and striatum. Specific for cholinergic neurons.

It is found in the presynaptic cell membrane. The protein localises to the cell projection. It localises to the axon. Its subcellular location is the early endosome membrane. The protein resides in the cytoplasmic vesicle. It is found in the secretory vesicle. The protein localises to the synaptic vesicle membrane. The catalysed reaction is choline(out) + n Na(+)(out) = choline(in) + n Na(+)(in). With respect to regulation, choline uptake activity is regulated by SLC5A7/CHT1 internalization (inactive form) from the cell surface and recycling of internalized SLC5A7/CHT1 into the cell surface (active form). Activated by extracellular chloride ion. Specifically inhibited by nanomolar concentrations of hemicholinium 3. In terms of biological role, high-affinity Na(+)-coupled choline transmembrane symporter. Functions as an electrogenic, voltage-dependent transporter with variable charge/choline stoichiometry. Choline uptake and choline-induced current is also Cl(-)-dependent where Cl(-) is likely a regulatory ion rather than cotransported ion. Plays a critical role in acetylcholine (ACh) synthesis by taking up the substrate choline from the synaptic cleft into the presynaptic nerve terminals after neurotransmitter release. SLC5A7/CHT1-mediated choline high-affinity transport in cholinergic neurons is the rate-limiting step for production of ACh, thereby facilitating communication by subsequent action potentials. Localized predominantly in presynaptic terminal intracellular organelles, and translocated to the plasma membrane in active form in response to neuronal activity. The protein is High affinity choline transporter 1 of Rattus norvegicus (Rat).